A 119-amino-acid polypeptide reads, in one-letter code: UPF0102 protein HI_1656 (119 aa).

It belongs to the UPF0102 family.

This is UPF0102 protein HI_1656 from Haemophilus influenzae (strain ATCC 51907 / DSM 11121 / KW20 / Rd).